A 437-amino-acid chain; its full sequence is Perilipin-2 (437 aa).

Ala-2 carries the N-acetylalanine modification. Residue Ser-215 is modified to Phosphoserine. The residue at position 232 (Tyr-232) is a Phosphotyrosine. The segment at 412–437 (SQNAQDQGAEMDKSSQETQRSEHKTH) is disordered. Residues 421–437 (EMDKSSQETQRSEHKTH) are compositionally biased toward basic and acidic residues.

It belongs to the perilipin family. Interacts with IRGC. In terms of processing, acylated; primarily with C14, C16 and C18 fatty acids. Phosphorylation at Tyr-232 by isoform 1 of CHKA (CHKalpha2) promotes dissociation from lipid droplets: dissociation is followed by recruitment of autophagosome machinery to lipid droplets and subsequent lipid droplet lipolysis. Post-translationally, polyubiquitination of Nt-acetylatable A-PLIN2 by MARCHF6 lead to degradation by 26S proteasomes. In terms of tissue distribution, milk lipid globules.

It is found in the membrane. The protein localises to the lipid droplet. Its function is as follows. Structural component of lipid droplets, which is required for the formation and maintenance of lipid storage droplets. This is Perilipin-2 from Homo sapiens (Human).